A 1486-amino-acid polypeptide reads, in one-letter code: Chromosome partition protein MukB (1486 aa).

34–41 (GGNGAGKS) is a binding site for ATP. Coiled coils occupy residues 326 to 418 (LEAD…QYNQ), 444 to 480 (LETF…QAYQ), and 509 to 603 (RHLA…RAPV). A flexible hinge region spans residues 666 to 783 (PGGSEDQRLN…EVPLFGRAAR (118 aa)). Coiled-coil stretches lie at residues 835–923 (EAEI…AKLE), 977–1115 (EMLS…TAKA), and 1209–1266 (VEAI…QNVS).

It belongs to the SMC family. MukB subfamily. As to quaternary structure, homodimerization via its hinge domain. Binds to DNA via its C-terminal region. Interacts, and probably forms a ternary complex, with MukE and MukF via its C-terminal region. The complex formation is stimulated by calcium or magnesium. Interacts with tubulin-related protein FtsZ.

The protein localises to the cytoplasm. It is found in the nucleoid. In terms of biological role, plays a central role in chromosome condensation, segregation and cell cycle progression. Functions as a homodimer, which is essential for chromosome partition. Involved in negative DNA supercoiling in vivo, and by this means organize and compact chromosomes. May achieve or facilitate chromosome segregation by condensation DNA from both sides of a centrally located replisome during cell division. This chain is Chromosome partition protein MukB, found in Escherichia coli O6:H1 (strain CFT073 / ATCC 700928 / UPEC).